Consider the following 137-residue polypeptide: Large ribosomal subunit protein uL16 (137 aa).

The protein belongs to the universal ribosomal protein uL16 family. In terms of assembly, part of the 50S ribosomal subunit.

Binds 23S rRNA and is also seen to make contacts with the A and possibly P site tRNAs. The protein is Large ribosomal subunit protein uL16 of Aromatoleum aromaticum (strain DSM 19018 / LMG 30748 / EbN1) (Azoarcus sp. (strain EbN1)).